Here is a 413-residue protein sequence, read N- to C-terminus: MGSLSTILRHPDELYPLLKLKLAITKAQKQIPLEPHLAFCYSILHKVSKSFSLVIQQLGTELRNAVCVFYLILRALDTVEDDTSVPVEIKVPILIAFHRHIYDGDWHFSCGTKEYKLLMDQFHHVSAAFLKLEKGYQEAIEDITKRMGAGMAKFICKEVETIDDYDEYCHYAAGLVGLGLSKIFIASELEILTPDWKQISNSTGLFLQKTNIIKDYLEDINERPKSRMFWPREIWGKYVDKLEDFKNEEKATKAVQCLNEMVTNALNHVEDCLKSLASLRDPAIFQSCAIPQIVAIGTLALCYNNVQVFRGVVRLRRGLIAKVIDRTKTMDDVYGAFYDFSCMLQTKVDNNDPNAMKTLNRLETIKKFCKENGGLHKRKSYVNDETQSKAIFVVMFVLLLAIVVVYLKANQCK.

The residue at position 2 (Gly2) is an N-acetylglycine. 2 helical membrane passes run Ala283–Tyr303 and Ala390–Asn410.

Belongs to the phytoene/squalene synthase family. Requires Mg(2+) as cofactor. Mn(2+) is required as a cofactor. As to expression, mostly expressed in hypocotyls, leaves and cotyledons, and, to a lower extent, in stems.

It localises to the endoplasmic reticulum membrane. In Arabidopsis thaliana (Mouse-ear cress), this protein is Inactive squalene synthase 2.